The sequence spans 616 residues: D-glutamate cyclase, mitochondrial (616 aa).

A mitochondrion-targeting transit peptide spans 1 to 28 (MPFTLHLRSRLPSAIRSLILQKKPNIRN).

The protein belongs to the D-glutamate cyclase family.

The protein localises to the mitochondrion matrix. It catalyses the reaction D-glutamate = 5-oxo-D-proline + H2O. In terms of biological role, D-glutamate cyclase that converts D-glutamate to 5-oxo-D-proline. This chain is D-glutamate cyclase, mitochondrial, found in Homo sapiens (Human).